The chain runs to 698 residues: UvrABC system protein B (698 aa).

Positions 28-414 (RRILAGERDV…SGGEFVEQVI (387 aa)) constitute a Helicase ATP-binding domain. 41 to 48 (GATGTGKS) is a binding site for ATP. The Beta-hairpin motif lies at 94 to 117 (YYDYYQPEAYIAQTDTYIEKDSSI). A Helicase C-terminal domain is found at 432 to 598 (QIDDLIGEIR…PLRKKIADIL (167 aa)). Residues 609–629 (DTVQVGGSGRNVSRGRRAQSE) are disordered. Residues 653 to 688 (ADLIKDLTAQMMAAASDLQFELAARFRDEIADLKKE) enclose the UVR domain.

It belongs to the UvrB family. In terms of assembly, forms a heterotetramer with UvrA during the search for lesions. Interacts with UvrC in an incision complex.

It is found in the cytoplasm. In terms of biological role, the UvrABC repair system catalyzes the recognition and processing of DNA lesions. A damage recognition complex composed of 2 UvrA and 2 UvrB subunits scans DNA for abnormalities. Upon binding of the UvrA(2)B(2) complex to a putative damaged site, the DNA wraps around one UvrB monomer. DNA wrap is dependent on ATP binding by UvrB and probably causes local melting of the DNA helix, facilitating insertion of UvrB beta-hairpin between the DNA strands. Then UvrB probes one DNA strand for the presence of a lesion. If a lesion is found the UvrA subunits dissociate and the UvrB-DNA preincision complex is formed. This complex is subsequently bound by UvrC and the second UvrB is released. If no lesion is found, the DNA wraps around the other UvrB subunit that will check the other stand for damage. The sequence is that of UvrABC system protein B from Mycobacterium leprae (strain TN).